Here is a 157-residue protein sequence, read N- to C-terminus: Phosphopantetheine adenylyltransferase (157 aa).

Ser9 contributes to the substrate binding site. Residues 9-10 (SF) and His17 each bind ATP. Substrate is bound by residues Lys41, Leu73, and Lys87. ATP is bound by residues 88-90 (GLR), Glu98, and 123-129 (YSYLSSS).

It belongs to the bacterial CoaD family. Homohexamer. Mg(2+) is required as a cofactor.

It localises to the cytoplasm. The enzyme catalyses (R)-4'-phosphopantetheine + ATP + H(+) = 3'-dephospho-CoA + diphosphate. Its pathway is cofactor biosynthesis; coenzyme A biosynthesis; CoA from (R)-pantothenate: step 4/5. Reversibly transfers an adenylyl group from ATP to 4'-phosphopantetheine, yielding dephospho-CoA (dPCoA) and pyrophosphate. This Alkaliphilus metalliredigens (strain QYMF) protein is Phosphopantetheine adenylyltransferase.